A 90-amino-acid polypeptide reads, in one-letter code: Protein LIM1 (90 aa).

The N-terminal stretch at 1–26 (MASMKSLATAILVVLLLAALSREGRS) is a signal peptide. Disulfide bonds link C29–C66, C39–C55, C56–C81, and C68–C88.

Belongs to the A9/FIL1 family.

It localises to the secreted. The protein is Protein LIM1 (LIM1) of Lilium longiflorum (Trumpet lily).